A 170-amino-acid chain; its full sequence is NADH-quinone oxidoreductase subunit B (170 aa).

[4Fe-4S] cluster is bound by residues Cys42, Cys43, Cys107, and Cys136.

The protein belongs to the complex I 20 kDa subunit family. In terms of assembly, NDH-1 is composed of 14 different subunits. Subunits NuoB, C, D, E, F, and G constitute the peripheral sector of the complex. Requires [4Fe-4S] cluster as cofactor.

It localises to the cell inner membrane. It carries out the reaction a quinone + NADH + 5 H(+)(in) = a quinol + NAD(+) + 4 H(+)(out). Its function is as follows. NDH-1 shuttles electrons from NADH, via FMN and iron-sulfur (Fe-S) centers, to quinones in the respiratory chain. The immediate electron acceptor for the enzyme in this species is believed to be ubiquinone. Couples the redox reaction to proton translocation (for every two electrons transferred, four hydrogen ions are translocated across the cytoplasmic membrane), and thus conserves the redox energy in a proton gradient. In Campylobacter concisus (strain 13826), this protein is NADH-quinone oxidoreductase subunit B.